Reading from the N-terminus, the 130-residue chain is MAKVQYMGTGRRKKSVARVRLVPGNGKVVINKREIETFFGLETLRVIVNQPLVLTGTKDKFDVLVNVHGGGFTGQAGAIRHGITRALVKSDETLRPELKKAGFLTRDPRMKERKKYGLKKARRAPQFSKR.

Over residues 99–110 the composition is skewed to basic and acidic residues; sequence KKAGFLTRDPRM. Residues 99–130 form a disordered region; that stretch reads KKAGFLTRDPRMKERKKYGLKKARRAPQFSKR. A compositionally biased stretch (basic residues) spans 111–130; it reads KERKKYGLKKARRAPQFSKR.

It belongs to the universal ribosomal protein uS9 family.

In Clostridium botulinum (strain Eklund 17B / Type B), this protein is Small ribosomal subunit protein uS9.